A 242-amino-acid polypeptide reads, in one-letter code: MSGSKREAALTGQPKDERKKSGGGVINRLKARRVQGKESGTSDQSSVTPFREEELLGLNQLRPEHVLGLSRVTENYLCKPEDNIYGIDFTRFKIRDLETGTVLFEISKPCSEQEEEEEESTHLDASAGRFVRYQFTPAFLRLRKVGATVEFTVGDKPVKSFRMIERHYFRDHILKSFDFDFGFCIPNSRNTCEHMYEFPQLSEELIRQMTENPYETRSDSFYFVDNKLIMHNKADYAYNGGH.

Residues 1-20 (MSGSKREAALTGQPKDERKK) are compositionally biased toward basic and acidic residues. The segment at 1 to 49 (MSGSKREAALTGQPKDERKKSGGGVINRLKARRVQGKESGTSDQSSVTP) is disordered. The span at 38 to 48 (ESGTSDQSSVT) shows a compositional bias: polar residues. Residue Tyr-133 participates in tetradecanoate binding.

Belongs to the PDE6D/unc-119 family.

Myristoyl-binding protein that acts as a cargo adapter: specifically binds the myristoyl moiety of a subset of N-terminally myristoylated proteins and is required for their localization. Plays a key role in localization of proteins to the primary cilium membrane. This chain is Protein unc-119 homolog B-A (unc119b-a), found in Xenopus laevis (African clawed frog).